We begin with the raw amino-acid sequence, 398 residues long: Elongation factor Tu (398 aa).

The 199-residue stretch at 10–208 (KPHVNVGTIG…ALDSHIPEPT (199 aa)) folds into the tr-type G domain. The tract at residues 19–26 (GHIDHGKT) is G1. 19–26 (GHIDHGKT) serves as a coordination point for GTP. Mg(2+) is bound at residue T26. The tract at residues 60–64 (TKTVT) is G2. Positions 83–86 (DCPG) are G3. Residues 83 to 87 (DCPGH) and 138 to 141 (NKCD) contribute to the GTP site. The segment at 138 to 141 (NKCD) is G4. Residues 176-178 (SSL) form a G5 region.

It belongs to the TRAFAC class translation factor GTPase superfamily. Classic translation factor GTPase family. EF-Tu/EF-1A subfamily. In terms of assembly, monomer.

The protein resides in the cytoplasm. The enzyme catalyses GTP + H2O = GDP + phosphate + H(+). GTP hydrolase that promotes the GTP-dependent binding of aminoacyl-tRNA to the A-site of ribosomes during protein biosynthesis. This is Elongation factor Tu from Rhodopirellula baltica (strain DSM 10527 / NCIMB 13988 / SH1).